A 140-amino-acid polypeptide reads, in one-letter code: 3-hydroxyacyl-[acyl-carrier-protein] dehydratase FabZ (140 aa).

His-48 is a catalytic residue.

This sequence belongs to the thioester dehydratase family. FabZ subfamily.

It is found in the cytoplasm. It catalyses the reaction a (3R)-hydroxyacyl-[ACP] = a (2E)-enoyl-[ACP] + H2O. Involved in unsaturated fatty acids biosynthesis. Catalyzes the dehydration of short chain beta-hydroxyacyl-ACPs and long chain saturated and unsaturated beta-hydroxyacyl-ACPs. In Ligilactobacillus salivarius (strain UCC118) (Lactobacillus salivarius), this protein is 3-hydroxyacyl-[acyl-carrier-protein] dehydratase FabZ.